A 261-amino-acid chain; its full sequence is MEKRERHFVLVHGACHGAWCWYKVTTFLRSAGHKVTALDLAAAGANGKRLDELNSISDYHEPLMKFMTSLVAGEKVILVAHSLGGVSVSVAMERFPQKISVAVFVSAYMPGPDFNLSTVYQELHQRRQGASKDTQYTFDRGSNNPPTSIIFSPEDLAAKLYQLSPPEDLTLATTLMRPTKLFRGENLLKETTVTREKYGTVRRVYIVCDKDNILKEDFQRWMIKNNPSDEVKVIMGSDHMPMFSKPLDLCAYLQEIVESYS.

The region spanning 8–251 is the AB hydrolase-1 domain; sequence FVLVHGACHG…MFSKPLDLCA (244 aa). Residue serine 82 is the Acyl-ester intermediate of the active site. Catalysis depends on charge relay system residues aspartate 211 and histidine 239.

Belongs to the AB hydrolase superfamily. Methylesterase family. In terms of assembly, homodimer.

It carries out the reaction methyl (-)-jasmonate + H2O = jasmonate + methanol + H(+). The catalysed reaction is methyl salicylate + H2O = salicylate + methanol + H(+). Its pathway is plant hormone biosynthesis. It functions in the pathway lipid metabolism; oxylipin biosynthesis. In terms of biological role, methylesterase that catalyzes the hydrolysis of methyl jasmonate (MeJA) into jasmonate (JA). Can also use methyl salicylate (MeSA) as substrate with a lower efficiency. The sequence is that of Methyl jasmonate esterase 1 from Vitis vinifera (Grape).